Consider the following 57-residue polypeptide: Small ribosomal subunit protein bS21 (57 aa).

The protein belongs to the bacterial ribosomal protein bS21 family.

The protein is Small ribosomal subunit protein bS21 of Bacillus cytotoxicus (strain DSM 22905 / CIP 110041 / 391-98 / NVH 391-98).